We begin with the raw amino-acid sequence, 1074 residues long: Calcium-transporting ATPase 8, plasma membrane-type (1074 aa).

Positions 1–33 are disordered; sequence MTSLLKSSPGRRRGGDVESGKSEHADSDSDTFY. At 1–180 the chain is on the cytoplasmic side; that stretch reads MTSLLKSSPG…NTYPRKKGKG (180 aa). The span at 13–27 shows a compositional bias: basic and acidic residues; the sequence is RGGDVESGKSEHADS. An interaction with calmodulin region spans residues 43–54; that stretch reads RLQQWRKAALVL. A helical transmembrane segment spans residues 181 to 201; it reads FLRFLWDACHDLTLIILMVAA. Over 202–219 the chain is Extracellular; that stretch reads VASLALGIKTEGIKEGWY. The helical transmembrane segment at 220–240 threads the bilayer; sequence DGGSIAFAVILVIVVTAVSDY. Topologically, residues 241-369 are cytoplasmic; that stretch reads KQSLQFQNLN…GEETPLQVRL (129 aa). Residues 370 to 389 traverse the membrane as a helical segment; that stretch reads NGVATFIGSIGLAVAAAVLV. The Extracellular portion of the chain corresponds to 390-426; the sequence is ILLTRYFTGHTKDNNGGPQFVKGKTKVGHVIDDVVKV. The chain crosses the membrane as a helical span at residues 427-444; sequence LTVAVTIVVVAVPEGLPL. Over 445 to 840 the chain is Cytoplasmic; it reads AVTLTLAYSM…RWGRSVYANI (396 aa). Asp-482 serves as the catalytic 4-aspartylphosphate intermediate. Residues Asp-785 and Asp-789 each coordinate Mg(2+). Residues 841-859 form a helical membrane-spanning segment; sequence QKFIQFQLTVNVAALVINV. Residues 860-870 lie on the Extracellular side of the membrane; sequence VAAISSGDVPL. Residues 871–891 traverse the membrane as a helical segment; it reads TAVQLLWVNLIMDTLGALALA. The Cytoplasmic portion of the chain corresponds to 892–911; it reads TEPPTDHLMGRPPVGRKEPL. The chain crosses the membrane as a helical span at residues 912–934; it reads ITNIMWRNLLIQAIYQVSVLLTL. At 935–949 the chain is on the extracellular side; the sequence is NFRGISILGLEHEVH. The chain crosses the membrane as a helical span at residues 950 to 971; the sequence is EHATRVKNTIIFNAFVLCQAFN. Over 972–989 the chain is Cytoplasmic; it reads EFNARKPDEKNIFKGVIK. A helical membrane pass occupies residues 990–1011; that stretch reads NRLFMGIIVITLVLQVIIVEFL. Over 1012 to 1021 the chain is Extracellular; the sequence is GKFASTTKLN. Residues 1022–1043 traverse the membrane as a helical segment; the sequence is WKQWLICVGIGVISWPLALVGK. At 1044–1074 the chain is on the cytoplasmic side; it reads FIPVPAAPISNKLKVLKFWGKKKNSSGEGSL.

This sequence belongs to the cation transport ATPase (P-type) (TC 3.A.3) family. Type IIB subfamily.

The protein localises to the cell membrane. The catalysed reaction is Ca(2+)(in) + ATP + H2O = Ca(2+)(out) + ADP + phosphate + H(+). Its activity is regulated as follows. Activated by calmodulin. Functionally, this magnesium-dependent enzyme catalyzes the hydrolysis of ATP coupled with the translocation of calcium from the cytosol out of the cell. The sequence is that of Calcium-transporting ATPase 8, plasma membrane-type (ACA8) from Arabidopsis thaliana (Mouse-ear cress).